We begin with the raw amino-acid sequence, 138 residues long: Large ribosomal subunit protein uL16 (138 aa).

The protein belongs to the universal ribosomal protein uL16 family. Part of the 50S ribosomal subunit.

Binds 23S rRNA and is also seen to make contacts with the A and possibly P site tRNAs. The chain is Large ribosomal subunit protein uL16 from Chlamydia muridarum (strain MoPn / Nigg).